The following is a 128-amino-acid chain: Large ribosomal subunit protein bL20 (128 aa).

Belongs to the bacterial ribosomal protein bL20 family.

Its function is as follows. Binds directly to 23S ribosomal RNA and is necessary for the in vitro assembly process of the 50S ribosomal subunit. It is not involved in the protein synthesizing functions of that subunit. The polypeptide is Large ribosomal subunit protein bL20 (Micrococcus luteus (strain ATCC 4698 / DSM 20030 / JCM 1464 / CCM 169 / CCUG 5858 / IAM 1056 / NBRC 3333 / NCIMB 9278 / NCTC 2665 / VKM Ac-2230) (Micrococcus lysodeikticus)).